Here is a 450-residue protein sequence, read N- to C-terminus: IMP-specific 5'-nucleotidase 1 (450 aa).

Histidine 144 is a binding site for ATP. Aspartate 172 (nucleophile) is an active-site residue. Residues aspartate 172, aspartate 174, aspartate 180, threonine 208, aspartate 376, and lysine 384 each coordinate IMP. 2 residues coordinate Mg(2+): aspartate 172 and aspartate 174. The Proton donor role is filled by aspartate 174. Aspartate 411 contacts Mg(2+).

It belongs to the ISN1 family. Homotetramer. Requires Mg(2+) as cofactor.

The catalysed reaction is IMP + H2O = inosine + phosphate. With respect to regulation, allosterically activated by ATP. ATP binding is a prerequisite to magnesium and substrate binding. ATP binds to 2 of the subunits in the homotetramer inducing a closure of these 2 subunits and the release of the C-terminal loop, thereby activating the enzyme. Its function is as follows. IMP-specific 5'-nucleotidase involved in IMP (inosine 5'-phosphate) degradation. The polypeptide is IMP-specific 5'-nucleotidase 1 (ISN1) (Saccharomyces cerevisiae (strain ATCC 204508 / S288c) (Baker's yeast)).